We begin with the raw amino-acid sequence, 439 residues long: MVMEVTETERWCVVTGGRGFAARHLVEMLVRYQMFHVRIADLAPAIVLNPHEETGILGEAIRSGRVQYVSADLRNKTQVVKGFQGAEVVFHMAAPDSSINNHQLQYSVNVQGTTNVIDACIEVGVKRLIYTSSPSVVFDGVHGTLNADESLPYPPKHNDSYSATKAEGEALILKANGRSGLLTCCIRPSSIFGPGDKLMVPSLVTAARAGKSKFIIGDGSNFYDFTYVENVVHAHVCAERALASGGEVCAKAAGQAYFITNMEPIKFWEFMSQLLEGLGYERPSIKIPASLMMPIAYLVELAYKLLGPYGMKVPVLTPSRVRLLSCNRTFDSSKAKDRLGYSPVVPLQEGIKRTIDSFSHLKAQNQPKTEVTETIQWKKQTLIAIVILITLYHNFVATTGSSSVIITAVSKVLLVSSIFMFINGILPEKMKVFGSKKID.

16–21 (GGRGFA) serves as a coordination point for NAD(+). N-linked (GlcNAc...) asparagine glycans are attached at residues Asn75 and Asn158. NAD(+) is bound by residues Tyr161 and Lys165. Lys165 functions as the Proton donor in the catalytic mechanism. Asn327 carries N-linked (GlcNAc...) asparagine glycosylation. The region spanning 371–439 (VTETIQWKKQ…MKVFGSKKID (69 aa)) is the Reticulon; atypical domain. Helical transmembrane passes span 381 to 401 (TLIA…TTGS) and 405 to 425 (IITA…INGI).

The protein belongs to the 3-beta-HSD family.

It is found in the endoplasmic reticulum membrane. The enzyme catalyses a 3beta-hydroxysteroid-4alpha-carboxylate + NAD(+) = a 3-oxosteroid + CO2 + NADH. It catalyses the reaction 4alpha-carboxy-4beta,14alpha-dimethyl-9beta,19-cyclo-5alpha-ergost-24(24(1))-en-3beta-ol + NAD(+) = cycloeucalenone + CO2 + NADH. It functions in the pathway steroid biosynthesis; zymosterol biosynthesis; zymosterol from lanosterol: step 4/6. 3beta-hydroxysteroid-dehydrogenase/decarboxylase involved in sterol synthesis. Catalyzes the formation of 3-oxosteroids from 3beta-hydroxysteroids-4alpha-carboxylate. Involved in the regulation of inflorescence internodes and leaves growth, probably by affecting auxin transporter activity possibly by altering sterol composition in the membranes. This is 3beta-hydroxysteroid-dehydrogenase/decarboxylase isoform 1 from Arabidopsis thaliana (Mouse-ear cress).